The sequence spans 147 residues: Large ribosomal subunit protein bL9 (147 aa).

It belongs to the bacterial ribosomal protein bL9 family.

Binds to the 23S rRNA. This is Large ribosomal subunit protein bL9 from Nitratiruptor sp. (strain SB155-2).